The primary structure comprises 227 residues: Cytidylate kinase (227 aa).

12-20 lines the ATP pocket; sequence GPSGAGKGT.

The protein belongs to the cytidylate kinase family. Type 1 subfamily.

It is found in the cytoplasm. The enzyme catalyses CMP + ATP = CDP + ADP. It carries out the reaction dCMP + ATP = dCDP + ADP. The protein is Cytidylate kinase of Xanthomonas oryzae pv. oryzae (strain PXO99A).